We begin with the raw amino-acid sequence, 427 residues long: Serine--tRNA ligase (427 aa).

231–233 (TAE) contacts L-serine. 262-264 (RSE) contacts ATP. Glu-285 is an L-serine binding site. 349-352 (EISS) lines the ATP pocket. Residue Ser-385 participates in L-serine binding.

It belongs to the class-II aminoacyl-tRNA synthetase family. Type-1 seryl-tRNA synthetase subfamily. Homodimer. The tRNA molecule binds across the dimer.

It is found in the cytoplasm. It catalyses the reaction tRNA(Ser) + L-serine + ATP = L-seryl-tRNA(Ser) + AMP + diphosphate + H(+). It carries out the reaction tRNA(Sec) + L-serine + ATP = L-seryl-tRNA(Sec) + AMP + diphosphate + H(+). Its pathway is aminoacyl-tRNA biosynthesis; selenocysteinyl-tRNA(Sec) biosynthesis; L-seryl-tRNA(Sec) from L-serine and tRNA(Sec): step 1/1. In terms of biological role, catalyzes the attachment of serine to tRNA(Ser). Is also able to aminoacylate tRNA(Sec) with serine, to form the misacylated tRNA L-seryl-tRNA(Sec), which will be further converted into selenocysteinyl-tRNA(Sec). In Methylococcus capsulatus (strain ATCC 33009 / NCIMB 11132 / Bath), this protein is Serine--tRNA ligase.